Reading from the N-terminus, the 515-residue chain is Thioredoxin domain-containing protein 2 (515 aa).

The tract at residues 1–23 is disordered; the sequence is MTLNNGGKANERGSNENPLQALS. Phosphoserine occurs at positions 14 and 39. The disordered stretch occupies residues 51-390; it reads TLHMSTEESE…NTIKSSEEDV (340 aa). Composition is skewed to polar residues over residues 61 to 75 and 85 to 136; these read FPQQ…SENT and KPSS…TNST. Repeat copies occupy residues 92–106, 107–121, 122–136, 137–151, 152–166, 167–181, 182–196, 197–211, 212–226, 227–241, 242–256, 257–271, 272–286, 287–301, 302–316, 317–331, 332–346, 347–362, 363–375, 376–390, and 391–405. The tract at residues 92–405 is 21 X 15 AA approximate tandem repeat of Q-P-K-X-G-D-I-P-K-S-[PS]-E-[KE]-X-I; the sequence is QLKQENISKS…KLLGLGAEIE (314 aa). 2 stretches are compositionally biased toward basic and acidic residues: residues 137–293 and 302–358; these read HYRE…ETKV and QSKE…KSPE. Position 146 is a phosphoserine (Ser-146). Positions 375 to 384 are enriched in polar residues; the sequence is IQSQEGNTIK. Residues 398 to 515 form the Thioredoxin domain; the sequence is LGLGAEIETL…KLERSISELK (118 aa). A disulfide bridge links Cys-442 with Cys-445.

As to expression, testis-specific. Strongly expressed in the testicular seminiferous tubules, mostly in the round spermatids.

It is found in the cytoplasm. Functionally, probably plays a regulatory role in sperm development. May participate in regulation of fibrous sheath (FS) assembly by supporting the formation of disulfide bonds during sperm tail morphogenesis. May also be required to rectify incorrect disulfide pairing and generate suitable pairs between the FS constituents. Can reduce disulfide bonds in vitro in the presence of NADP and thioredoxin reductase. The protein is Thioredoxin domain-containing protein 2 (Txndc2) of Mus musculus (Mouse).